The sequence spans 409 residues: Arginine deiminase (409 aa).

C399 serves as the catalytic Amidino-cysteine intermediate.

The protein belongs to the arginine deiminase family.

It localises to the cytoplasm. It carries out the reaction L-arginine + H2O = L-citrulline + NH4(+). It participates in amino-acid degradation; L-arginine degradation via ADI pathway; carbamoyl phosphate from L-arginine: step 1/2. This Streptococcus pneumoniae (strain P1031) protein is Arginine deiminase.